The sequence spans 338 residues: N-acetyl-gamma-glutamyl-phosphate reductase (338 aa).

The active site involves Cys148.

It belongs to the NAGSA dehydrogenase family. Type 1 subfamily.

The protein localises to the cytoplasm. It carries out the reaction N-acetyl-L-glutamate 5-semialdehyde + phosphate + NADP(+) = N-acetyl-L-glutamyl 5-phosphate + NADPH + H(+). The protein operates within amino-acid biosynthesis; L-arginine biosynthesis; N(2)-acetyl-L-ornithine from L-glutamate: step 3/4. Its function is as follows. Catalyzes the NADPH-dependent reduction of N-acetyl-5-glutamyl phosphate to yield N-acetyl-L-glutamate 5-semialdehyde. The chain is N-acetyl-gamma-glutamyl-phosphate reductase from Leptospira interrogans serogroup Icterohaemorrhagiae serovar copenhageni (strain Fiocruz L1-130).